The following is a 309-amino-acid chain: Probable manganese-dependent inorganic pyrophosphatase (309 aa).

Mn(2+) is bound by residues His9, Asp13, Asp15, Asp75, His97, and Asp149.

This sequence belongs to the PPase class C family. Mn(2+) serves as cofactor.

It is found in the cytoplasm. The enzyme catalyses diphosphate + H2O = 2 phosphate + H(+). The protein is Probable manganese-dependent inorganic pyrophosphatase of Staphylococcus epidermidis (strain ATCC 35984 / DSM 28319 / BCRC 17069 / CCUG 31568 / BM 3577 / RP62A).